A 110-amino-acid polypeptide reads, in one-letter code: UPF0122 protein lin1916 (110 aa).

The protein belongs to the UPF0122 family.

Might take part in the signal recognition particle (SRP) pathway. This is inferred from the conservation of its genetic proximity to ftsY/ffh. May be a regulatory protein. The sequence is that of UPF0122 protein lin1916 from Listeria innocua serovar 6a (strain ATCC BAA-680 / CLIP 11262).